A 148-amino-acid polypeptide reads, in one-letter code: Phosphoribosyl-AMP cyclohydrolase (148 aa).

Aspartate 91 lines the Mg(2+) pocket. Cysteine 92 is a Zn(2+) binding site. Residues aspartate 93 and aspartate 95 each coordinate Mg(2+). The Zn(2+) site is built by cysteine 109 and cysteine 116.

The protein belongs to the PRA-CH family. As to quaternary structure, homodimer. Mg(2+) is required as a cofactor. It depends on Zn(2+) as a cofactor.

The protein resides in the cytoplasm. It catalyses the reaction 1-(5-phospho-beta-D-ribosyl)-5'-AMP + H2O = 1-(5-phospho-beta-D-ribosyl)-5-[(5-phospho-beta-D-ribosylamino)methylideneamino]imidazole-4-carboxamide. The protein operates within amino-acid biosynthesis; L-histidine biosynthesis; L-histidine from 5-phospho-alpha-D-ribose 1-diphosphate: step 3/9. Functionally, catalyzes the hydrolysis of the adenine ring of phosphoribosyl-AMP. The protein is Phosphoribosyl-AMP cyclohydrolase of Rhodopseudomonas palustris (strain HaA2).